The sequence spans 201 residues: Recombination protein RecR (201 aa).

The C4-type zinc-finger motif lies at Cys-57–Cys-72. The region spanning Gly-81–Pro-176 is the Toprim domain.

The protein belongs to the RecR family.

May play a role in DNA repair. It seems to be involved in an RecBC-independent recombinational process of DNA repair. It may act with RecF and RecO. The protein is Recombination protein RecR of Serratia proteamaculans (strain 568).